The primary structure comprises 71 residues: 7.9 kDa protein (71 aa).

The sequence is that of 7.9 kDa protein from Pseudomonas aeruginosa (Bacteriophage Pf3).